We begin with the raw amino-acid sequence, 211 residues long: Glycerol-3-phosphate acyltransferase (211 aa).

A run of 5 helical transmembrane segments spans residues 8 to 28 (YCLA…LILT), 84 to 104 (LALP…WLGF), 116 to 136 (VLLA…FAVA), 145 to 165 (AALC…GMGL), and 170 to 190 (LAQS…LVFL).

Belongs to the PlsY family. In terms of assembly, probably interacts with PlsX.

It is found in the cell inner membrane. It catalyses the reaction an acyl phosphate + sn-glycerol 3-phosphate = a 1-acyl-sn-glycero-3-phosphate + phosphate. It participates in lipid metabolism; phospholipid metabolism. In terms of biological role, catalyzes the transfer of an acyl group from acyl-phosphate (acyl-PO(4)) to glycerol-3-phosphate (G3P) to form lysophosphatidic acid (LPA). This enzyme utilizes acyl-phosphate as fatty acyl donor, but not acyl-CoA or acyl-ACP. In Granulibacter bethesdensis (strain ATCC BAA-1260 / CGDNIH1), this protein is Glycerol-3-phosphate acyltransferase.